We begin with the raw amino-acid sequence, 125 residues long: MSFLRPTLALLAVTALVTTSAQLNGYSKKEVTPEDTELLQKAQSNVSAYNSDVTSRICYLKVDSLETQVVSGENYKFHVSGCSVNSDKELGGCANQNCESSKYDIVIYSQSWTNTLKVTSITPAN.

The signal sequence occupies residues 1–21 (MSFLRPTLALLAVTALVTTSA). Asparagine 45 carries N-linked (GlcNAc...) asparagine glycosylation. The short motif at 68–72 (QVVSG) is the Secondary area of contact element.

Belongs to the cystatin family. In terms of assembly, interacts with the host papain-like cysteine protease PIP1. Interacts with the host papain-like cysteine protease RCR3. Interacts with the host papain-like cysteine protease C14.

Its subcellular location is the secreted. Its function is as follows. Secreted effector that interacts with and inhibits the pathogenesis-related papain-like cysteine proteases C14, PIP1 and RCR3 of host plants. Inhibition of host proteases by a pathogen extracellular protease inhibitor forms a specific type of defense-counterdefense mechanism between plants and microbial pathogens. The polypeptide is Cystatin-like cysteine protease inhibitor EPIC2B (Phytophthora infestans (strain T30-4) (Potato late blight agent)).